Reading from the N-terminus, the 421-residue chain is MLKAVILIGGPQKGTRFRPLSFEVPKPLFPVAGVPMVQHHIEACSKVPNLKEILLIGFYQPNEALSSFLLKAQQEFKVAIRYLQEYSALGTGGGIYHFRDQILSGGPQAFFVMNADVCSAFPLVPMLDFHKQHGGSQSYVILGTTANRSQSLNYGCIVANGETQEVLHYVEKPGTFVSDIINCGIYLFSPSIFQHIAEVFQRNQQELQLEENSSWQRTEVIRLEQDVFTTLAGRGKLYVYKTEGCWSQIKSAGSAIYASRLYLSQYGSTHPERLASTKEGGPTIRGNVYIHPTANVDPSAVLGPNVSIGMGVTVGAGVRIRESIVLHGAVLQDHSCVLNTIVGWDSTVGRWARVEGTPSDPNPNDPYSKIDSETLFREGKLTPSITILGCNVSIPAEVVILNSIVLPHKELSRSFKNQIIL.

The segment at 2-252 is substrate-binding domain; it reads LKAVILIGGP…EGCWSQIKSA (251 aa). Glu-85 and Gln-248 together coordinate GDP-alpha-D-mannose. The segment at 274–421 is hexapeptide repeat domain; sequence LASTKEGGPT…SRSFKNQIIL (148 aa). The interval 357 to 385 is C-loop; the sequence is TPSDPNPNDPYSKIDSETLFREGKLTPSI.

The protein belongs to the transferase hexapeptide repeat family. In terms of assembly, component of the GMPPA-GMPPB mannose-1-phosphate guanylyltransferase complex composed of 4 gmppa subunits and 8 gmppb subunits; the complex is organized into three layers, a central layer made up of 2 gmppa dimers sandwiched between two layers each made up of 2 gmppb dimers.

It localises to the cytoplasm. Its function is as follows. Regulatory subunit of the GMPPA-GMPPB mannose-1-phosphate guanylyltransferase complex; reduces the catalytic activity of GMPPB when part of the complex. Mediates allosteric feedback inhibition of GMPPB catalytic activity upon binding GDP-alpha-D-mannose. Together with GMPPB regulates GDP-alpha-D-mannose levels. This is Mannose-1-phosphate guanylyltransferase regulatory subunit alpha (gmppa) from Xenopus tropicalis (Western clawed frog).